The sequence spans 2491 residues: Cation-independent mannose-6-phosphate receptor (2491 aa).

Positions 1–40 are cleaved as a signal peptide; that stretch reads MGAAAGRSPHLGPAPARRPQRSLLLLQLLLLVAAPGSTQA. Topologically, residues 41 to 2304 are lumenal; that stretch reads QAAPFPELCS…MHKGLSERSQ (2264 aa). MRH domains are found at residues 47–163, 172–320, 326–468, 473–619, 625–762, 765–924, 932–1079, 1082–1219, 1225–1363, 1367–1508, 1514–1648, and 1650–1797; these read ELCS…ACKK, VPCY…ACHR, KTCS…ACVK, LLCG…ACVL, ENCT…ACPE, LECV…ACPI, QACS…ACVP, VDCQ…ACPV, DNCE…ACPP, TECS…ACPM, DDCQ…ACEQ, and TECS…VCPD. 2 disulfides stabilise this stretch: Cys49-Cys69 and Cys77-Cys84. N-linked (GlcNAc...) asparagine glycosylation occurs at Asn112. 8 cysteine pairs are disulfide-bonded: Cys117–Cys149, Cys134–Cys161, Cys174–Cys212, Cys228–Cys235, Cys275–Cys306, Cys288–Cys318, Cys328–Cys366, and Cys374–Cys382. N-linked (GlcNAc...) asparagine glycans are attached at residues Asn400 and Asn435. 4 disulfide bridges follow: Cys420–Cys454, Cys434–Cys466, Cys475–Cys519, and Cys531–Cys538. N-linked (GlcNAc...) asparagine glycans are attached at residues Asn543 and Asn581. 2 cysteine pairs are disulfide-bonded: Cys572–Cys605 and Cys586–Cys617. N-linked (GlcNAc...) asparagine glycosylation is present at Asn626. 5 disulfides stabilise this stretch: Cys627/Cys664, Cys672/Cys679, Cys731/Cys760, Cys767/Cys814, and Cys823/Cys830. Asn747 is a glycosylation site (N-linked (GlcNAc...) asparagine). N-linked (GlcNAc...) asparagine glycosylation occurs at Asn871. Intrachain disulfides connect Cys875-Cys910, Cys893-Cys922, Cys934-Cys970, Cys976-Cys987, Cys1042-Cys1077, Cys1084-Cys1125, and Cys1134-Cys1142. N-linked (GlcNAc...) asparagine glycosylation is found at Asn951 and Asn957. A glycan (N-linked (GlcNAc...) asparagine) is linked at Asn1164. 4 cysteine pairs are disulfide-bonded: Cys1177/Cys1205, Cys1190/Cys1217, Cys1227/Cys1262, and Cys1270/Cys1282. An N-linked (GlcNAc...) asparagine glycan is attached at Asn1246. Asn1312 carries N-linked (GlcNAc...) asparagine glycosylation. 24 cysteine pairs are disulfide-bonded: Cys1319–Cys1349, Cys1333–Cys1361, Cys1369–Cys1408, Cys1420–Cys1427, Cys1461–Cys1494, Cys1476–Cys1506, Cys1516–Cys1553, Cys1559–Cys1566, Cys1598–Cys1634, Cys1614–Cys1646, Cys1652–Cys1695, Cys1706–Cys1713, Cys1750–Cys1783, Cys1766–Cys1795, Cys1804–Cys1839, Cys1850–Cys1856, Cys1893–Cys1975, Cys1903–Cys1927, Cys1917–Cys1942, Cys1957–Cys1987, Cys1994–Cys2029, Cys2039–Cys2046, Cys2082–Cys2113, and Cys2096–Cys2125. Residue Asn1656 is glycosylated (N-linked (GlcNAc...) asparagine). N-linked (GlcNAc...) asparagine glycosylation is present at Asn1757. One can recognise a Fibronectin type-II domain in the interval 1802 to 1989; that stretch reads DGCTLTDEQL…EWKTKVVCPP (188 aa). The N-linked (GlcNAc...) asparagine glycan is linked to Asn1816. 2 MRH domains span residues 1992–2127 and 2135–2280; these read LECK…ACAV and VNGT…VCPL. An N-linked (GlcNAc...) asparagine glycan is attached at Asn2085. N-linked (GlcNAc...) asparagine glycosylation occurs at Asn2136. 3 disulfide bridges follow: Cys2188–Cys2194, Cys2232–Cys2266, and Cys2248–Cys2278. Residues 2305–2327 traverse the membrane as a helical segment; the sequence is AVGAVLSLLLVALTCCLLALLLY. The Cytoplasmic portion of the chain corresponds to 2328–2491; sequence KKERRETVIS…DDSDEDLLHI (164 aa). Lys2352 carries the N6-acetyllysine modification. Ser2409 is subject to Phosphoserine. A disordered region spans residues 2424 to 2491; it reads GRGAGAESSH…DDSDEDLLHI (68 aa). The residue at position 2425 (Arg2425) is an Omega-N-methylarginine. The segment covering 2444–2459 has biased composition (basic and acidic residues); it reads QEREDDRVGLVRGEKA. The segment covering 2464-2477 has biased composition (polar residues); that stretch reads SSSAQQKTVSSTKL. Ser2479 and Ser2484 each carry phosphoserine. A compositionally biased stretch (basic and acidic residues) spans 2479–2491; that stretch reads SFHDDSDEDLLHI.

It belongs to the MRL1/IGF2R family. Binds HA-I and HA-II plasma membrane adapters. Interacts with DPP4; the interaction is direct. Binds GGA1, GGA2 and GGA3. Interacts with the heterotrimeric retromer cargo-selective complex (CSC), formed by VPS26 (VPS26A or VPS26B), VPS29 and VPS35; which is involved in retrograde trafficking of the receptor from endosomes to the Golgi apparatus. In terms of processing, palmitoylated. Undergoes cysteine S-palmitoylation which promotes interaction with the retromer cargo-selective complex which mediates its retrograde trafficking to the Golgi apparatus.

Its subcellular location is the golgi apparatus membrane. The protein localises to the endosome membrane. Its function is as follows. Mediates the transport of phosphorylated lysosomal enzymes from the Golgi complex and the cell surface to lysosomes. Lysosomal enzymes bearing phosphomannosyl residues bind specifically to mannose-6-phosphate receptors in the Golgi apparatus and the resulting receptor-ligand complex is transported to an acidic prelysosomal compartment where the low pH mediates the dissociation of the complex. The receptor is then recycled back to the Golgi for another round of trafficking through its binding to the retromer. This receptor also binds IGF2. Acts as a positive regulator of T-cell coactivation by binding DPP4. This Homo sapiens (Human) protein is Cation-independent mannose-6-phosphate receptor (IGF2R).